A 254-amino-acid polypeptide reads, in one-letter code: Nickel import ATP-binding protein NikD (254 aa).

One can recognise an ABC transporter domain in the interval 2–241; it reads PQQIELRNIA…PKHAVTRSLV (240 aa). 36 to 43 provides a ligand contact to ATP; sequence GGSGSGKS.

This sequence belongs to the ABC transporter superfamily. Nickel importer (TC 3.A.1.5.3) family. The complex is composed of two ATP-binding proteins (NikD and NikE), two transmembrane proteins (NikB and NikC) and a solute-binding protein (NikA).

It is found in the cell inner membrane. It catalyses the reaction Ni(2+)(out) + ATP + H2O = Ni(2+)(in) + ADP + phosphate + H(+). Its function is as follows. Part of the ABC transporter complex NikABCDE involved in nickel import. Responsible for energy coupling to the transport system. This chain is Nickel import ATP-binding protein NikD, found in Shigella sonnei (strain Ss046).